The following is a 259-amino-acid chain: Ribosomal RNA small subunit methyltransferase A (259 aa).

The S-adenosyl-L-methionine site is built by N13, L15, G39, E60, D84, and N101.

It belongs to the class I-like SAM-binding methyltransferase superfamily. rRNA adenine N(6)-methyltransferase family. RsmA subfamily.

It is found in the cytoplasm. The catalysed reaction is adenosine(1518)/adenosine(1519) in 16S rRNA + 4 S-adenosyl-L-methionine = N(6)-dimethyladenosine(1518)/N(6)-dimethyladenosine(1519) in 16S rRNA + 4 S-adenosyl-L-homocysteine + 4 H(+). In terms of biological role, specifically dimethylates two adjacent adenosines (A1518 and A1519) in the loop of a conserved hairpin near the 3'-end of 16S rRNA in the 30S particle. May play a critical role in biogenesis of 30S subunits. The polypeptide is Ribosomal RNA small subunit methyltransferase A (Mesomycoplasma hyopneumoniae (strain 232) (Mycoplasma hyopneumoniae)).